Consider the following 137-residue polypeptide: Putative pre-16S rRNA nuclease (137 aa).

This sequence belongs to the YqgF nuclease family.

It is found in the cytoplasm. Could be a nuclease involved in processing of the 5'-end of pre-16S rRNA. The chain is Putative pre-16S rRNA nuclease from Desulforamulus reducens (strain ATCC BAA-1160 / DSM 100696 / MI-1) (Desulfotomaculum reducens).